The primary structure comprises 33 residues: Photosystem II reaction center protein Psb30 (33 aa).

The chain crosses the membrane as a helical span at residues 5–25 (LIVQLGSLTLITIAGPLIVAL).

It belongs to the Psb30/Ycf12 family. In terms of assembly, PSII is composed of 1 copy each of membrane proteins PsbA, PsbB, PsbC, PsbD, PsbE, PsbF, PsbH, PsbI, PsbJ, PsbK, PsbL, PsbM, PsbT, PsbY, PsbZ, Psb30/Ycf12, peripheral proteins of the oxygen-evolving complex and a large number of cofactors. It forms dimeric complexes.

Its subcellular location is the plastid. It is found in the chloroplast thylakoid membrane. A core subunit of photosystem II (PSII), probably helps stabilize the reaction center. The chain is Photosystem II reaction center protein Psb30 from Euglena mutabilis.